Reading from the N-terminus, the 124-residue chain is Small ribosomal subunit protein bS6 (124 aa).

This sequence belongs to the bacterial ribosomal protein bS6 family.

Binds together with bS18 to 16S ribosomal RNA. The chain is Small ribosomal subunit protein bS6 from Actinobacillus pleuropneumoniae serotype 5b (strain L20).